Reading from the N-terminus, the 910-residue chain is E3 ubiquitin-protein ligase MARCHF6 (910 aa).

Position 1 is an N-acetylmethionine (methionine 1). An RING-CH-type zinc finger spans residues 1 to 62 (MDTAEEDICR…ELCKHRFAFT (62 aa)). Residues 1-91 (MDTAEEDICR…LVTSIGTAIR (91 aa)) lie on the Cytoplasmic side of the membrane. Zn(2+) is bound by residues cysteine 9, cysteine 12, cysteine 26, cysteine 28, histidine 36, cysteine 39, cysteine 52, and cysteine 55. Residues 92 to 112 (YWFHYTLVAFAWLGVVPLTAC) form a helical membrane-spanning segment. At 113-142 (RIYKCLFTGSVSSLLTLPLDMLSTENLLAD) the chain is on the extracellular side. A helical transmembrane segment spans residues 143–163 (CLQGCFVVTCTLCAFISLVWL). Residues 164–283 (REQIVHGGAP…WERMLGLDGS (120 aa)) are Cytoplasmic-facing. The disordered stretch occupies residues 185–256 (AAGHHQNEAP…AADANNGAQD (72 aa)). Acidic residues predominate over residues 223 to 248 (DAQDDQAEEEEEDNEEEDDAGVEDAA). The chain crosses the membrane as a helical span at residues 284-304 (LVFLEHVFWVVSLNTLFILVF). Topologically, residues 305-336 (AFCPYHIGHFSLVGLGFEEHVQASHFEGLITT) are extracellular. Residues 337–357 (IVGYILLAITLIICHGLATLV) traverse the membrane as a helical segment. Residues 358-376 (KFHRSRRLLGVCYIVVKVS) are Cytoplasmic-facing. The helical transmembrane segment at 377–397 (LLVVVEIGVFPLICGWWLDIC) threads the bilayer. Residues 398 to 421 (SLEMFDATLKDRELSFQSAPGTTM) lie on the Extracellular side of the membrane. A helical transmembrane segment spans residues 422–442 (FLHWLVGMVYVFYFASFILLL). Residues 443-480 (REVLRPGVLWFLRNLNDPDFNPVQEMIHLPIYRHLRRF) lie on the Cytoplasmic side of the membrane. The helical transmembrane segment at 481–501 (ILSVIVFGSIVLLMLWLPIRI) threads the bilayer. Residues 502-519 (IKSVLPNFLPYNVMLYSD) are Extracellular-facing. The chain crosses the membrane as a helical span at residues 520–540 (APVSELSLELLLLQVVLPALL). Topologically, residues 541–632 (EQRTHEAVAE…YRRPLNFPLR (92 aa)) are cytoplasmic. A helical transmembrane segment spans residues 633 to 653 (IFLLIVFMCITLLIASLICLT). Topologically, residues 654-678 (LPVFAGRWLMSFWTGTAKIHELYTA) are extracellular. Residues 679–699 (ACGLYVCWLTIRAVTVMVAWM) form a helical membrane-spanning segment. Topologically, residues 700–721 (PQGRRVVFQKVKEWSLMIMKTL) are cytoplasmic. The chain crosses the membrane as a helical span at residues 722-742 (IVAVLLAGVVPLLLGLLFELV). Topologically, residues 743–764 (IVAPLRVPLDQTPLFYPWQDWA) are extracellular. A helical membrane pass occupies residues 765–785 (LGVLHAKIIAAITLMGPQWWL). At 786–815 (KTVIEQVYANGIRNIDLHYIVRKLAAPVIS) the chain is on the cytoplasmic side. The helical transmembrane segment at 816–836 (VLLLSLCVPYVIASGVVPLLG) threads the bilayer. Residues 837 to 848 (VTAEMQNLVHRR) are Extracellular-facing. Residues 849-869 (IYPFLLMVVVLMAILSFQVRQ) traverse the membrane as a helical segment. The Cytoplasmic portion of the chain corresponds to 870 to 910 (FKRLYEHIKNDKYLVGQRLVNYERKSGKQGSSPPPPQSSQE).

This sequence belongs to the DOA10/MARCHF6 family. As to quaternary structure, interacts with DIO2. Interacts with SQLE. Auto-ubiquitinated, which results in proteasomal degradation. Deubiquitinated by USP19; protecting MARCHF6 from p97-mediated proteasomal degradation.

The protein resides in the endoplasmic reticulum membrane. It catalyses the reaction S-ubiquitinyl-[E2 ubiquitin-conjugating enzyme]-L-cysteine + [acceptor protein]-L-lysine = [E2 ubiquitin-conjugating enzyme]-L-cysteine + N(6)-ubiquitinyl-[acceptor protein]-L-lysine.. The protein operates within protein modification; protein ubiquitination. Endoplasmic reticulum membrane-associated E3 ubiquitin ligase that plays a critical role in mitigating endoplasmic reticulum stress, the regulation of cholesterol and lipid homeostasis, and ferroptosis. Acts as a pivotal component of both the Ac/N-degron pathway (targeting the N-terminal acetyl group of substrates) and the ER-associated protein degradation-cytosol (ERAD-C) pathway (targeting misfolded substrates). For instance, mediates the degradation of Ac/N-degron-bearing proteins such as the G-protein regulator RGS2 and the lipid droplet protein PLIN2. Suppresses endoplasmic reticulum stress and ferroptosis through cytosolic POMC degradation. Prevents ferroptosis by acting as a NADPH sensor during lipid peroxidation through its C-terminal regulatory region. Facilitates also the degradation of selected endoplasmic reticulum proteins by associating with signal peptide peptidase for the turnover of endogenous tail-anchored proteins. Promotes ubiquitination of DIO2, leading to its degradation. By ubiquitinating and thereby modulating the stability of many proteins of the cholesterol pathway including SQLE, CYP51A1, CYP11A1 and HMGCR, acts as a crucial post-translational regulator of cholesterol synthesis. The sequence is that of E3 ubiquitin-protein ligase MARCHF6 (MARCHF6) from Pongo abelii (Sumatran orangutan).